Consider the following 605-residue polypeptide: Copper resistance protein A (605 aa).

The segment at residues 1–41 is a signal peptide (tat-type signal); the sequence is MLLKTSRRTFLKGLTLSGVAGSLGVWSFNARSSLSLPVAAS. Positions 100, 102, 142, and 144 each coordinate Cu cation. Repeat copies occupy residues 382–389, 414–421, and 422–429. The 3 X 8 AA tandem repeats of D-H-X-X-M-X-G-M stretch occupies residues 382–429; it reads DHSQMGGMDNSGEMMSMDGADLPDSGTSSAPMDHSSMAGMDHSRMAGM. Cu cation is bound by residues H538, H541, H543, H586, C587, H588, H592, and M597.

This sequence belongs to the multicopper oxidase family. CopA subfamily. Post-translationally, predicted to be exported by the Tat system. The position of the signal peptide cleavage has not been experimentally proven.

It localises to the periplasm. Required for the copper-inducible expression of copper resistance. May have oxidase activity. In Escherichia coli, this protein is Copper resistance protein A (pcoA).